A 121-amino-acid polypeptide reads, in one-letter code: UPF0045 protein sll0230 (121 aa).

It belongs to the UPF0045 family.

The polypeptide is UPF0045 protein sll0230 (Synechocystis sp. (strain ATCC 27184 / PCC 6803 / Kazusa)).